The chain runs to 86 residues: MSTQPIITRFVLTEKAIRLAEKENTLTIVVPRSVNKKVIKDYVEKAYKVKVIDVRTLITMEGEKKAYVRLSSENNAIELLTNLGLL.

This sequence belongs to the universal ribosomal protein uL23 family. Part of the 50S ribosomal subunit. Contacts protein L29.

Functionally, binds to 23S rRNA. One of the proteins that surrounds the polypeptide exit tunnel on the outside of the ribosome. The polypeptide is Large ribosomal subunit protein uL23 (Caldivirga maquilingensis (strain ATCC 700844 / DSM 13496 / JCM 10307 / IC-167)).